A 202-amino-acid chain; its full sequence is LexA repressor (202 aa).

Positions 28-48 (IAEIARAIGVSSPHGVREQLR) form a DNA-binding region, H-T-H motif. Catalysis depends on for autocatalytic cleavage activity residues S120 and K157.

This sequence belongs to the peptidase S24 family. Homodimer.

The enzyme catalyses Hydrolysis of Ala-|-Gly bond in repressor LexA.. Represses a number of genes involved in the response to DNA damage (SOS response), including recA and lexA. In the presence of single-stranded DNA, RecA interacts with LexA causing an autocatalytic cleavage which disrupts the DNA-binding part of LexA, leading to derepression of the SOS regulon and eventually DNA repair. This is LexA repressor from Methylococcus capsulatus (strain ATCC 33009 / NCIMB 11132 / Bath).